Here is a 720-residue protein sequence, read N- to C-terminus: MNSNEDIHEERIEVPRTPHQTQPEKDSDRIALRDEISVPEGDEKAYSDEKVEMATTNASSNFGSNESAKDGESIGAFSNPHEALMQSKLREESQSKTILPSDDLSQQLETEESKVEEALKRITSPPLPPRADCIEESASALKSSLPPVLAGNKNDQAPLDRPQLPPRQVVNAETLHLKAPHGNATPSKSPTSAVGNSSSSTPPTLPPRRIEDPLDLAAQKHFLASTFKRNMLFYKSEDNSIKCDLDKNILNLKEDSKKINNNEIPEEVSSFWLKVIGDYQNILINDIETLHFQLSRGIPAAYRLVVWQLVSYAKSKSFDPIYETYLTEMAPFDVQEFENQLKMMDEVPSEYVKRISNVLKAYLLFDPECEFSTDIAYIINMILDVCEEEANAFGLLVRLMKVYGLRLLFLPSASEIDILCYKFDRLVEEFYPEIHNHMVEKGVRSSMFLPGFFTTLFQKKLPTEIQPRIGDMVFLEGIDSIMRILATLLSNSRDHLLKMGFDDMLELLKSGLLDAYIKQNDGTRGDTLLSNECMDKLLQDSMMKVAITPKTMKKYSSEYEEIHRLDNEKEVQYKSITEKNLHLQKHVRKLENDYTSLNREHVTIANELVKNRLNIESVLNENNGYKLQILDLKKKLDSEKKKQVLGVYVPNDLKKDLEETMKKNTQVMDENLKLQDRISELERLIEEIKTANKNGTLFEYSNSKNNPLGAGWSGFKKVFK.

Methionine 1 carries the post-translational modification N-acetylmethionine. Residues methionine 1–glutamate 52 show a composition bias toward basic and acidic residues. Residues methionine 1–aspartate 132 form a disordered region. Threonine 17 bears the Phosphothreonine mark. Position 37 is a phosphoserine (serine 37). Residues alanine 54–glutamate 66 are compositionally biased toward polar residues. Serine 73 carries the post-translational modification Phosphoserine. The span at serine 95–leucine 108 shows a compositional bias: polar residues. The segment covering glutamate 111–lysine 120 has biased composition (basic and acidic residues). Phosphoserine is present on serine 139. Disordered stretches follow at residues serine 144–leucine 164 and alanine 179–isoleucine 210. A compositionally biased stretch (polar residues) spans alanine 184 to asparagine 196. Residues glycine 297 to glycine 477 enclose the Rab-GAP TBC domain. A Glycyl lysine isopeptide (Lys-Gly) (interchain with G-Cter in SUMO) cross-link involves residue lysine 498. Positions glutamine 572–threonine 696 form a coiled coil.

The protein belongs to the GYP5 family. In terms of assembly, interacts with GYP5 and RVS167. Is part of SEC4-containing complexes.

The protein resides in the cytoplasm. It localises to the bud. The protein localises to the bud neck. In terms of biological role, probable GTPase-activating protein which stimulates the GTP hydrolysis rate by GYP5 of YPT1 and SEC4. Involved in ER to Golgi trafficking and polarized exocytosis. The chain is Probable GTPase-activating protein GYL1 (GYL1) from Saccharomyces cerevisiae (strain ATCC 204508 / S288c) (Baker's yeast).